The following is a 363-amino-acid chain: tRNA-specific 2-thiouridylase MnmA (363 aa).

ATP is bound by residues 13–20 (GLSGGVDS) and Met-39. The interval 99 to 101 (NPD) is interaction with target base in tRNA. The active-site Nucleophile is the Cys-104. A disulfide bridge connects residues Cys-104 and Cys-200. An ATP-binding site is contributed by Gly-128. The tract at residues 150 to 152 (KDQ) is interaction with tRNA. Cys-200 acts as the Cysteine persulfide intermediate in catalysis. An interaction with tRNA region spans residues 310-311 (RY).

This sequence belongs to the MnmA/TRMU family.

Its subcellular location is the cytoplasm. It catalyses the reaction S-sulfanyl-L-cysteinyl-[protein] + uridine(34) in tRNA + AH2 + ATP = 2-thiouridine(34) in tRNA + L-cysteinyl-[protein] + A + AMP + diphosphate + H(+). Functionally, catalyzes the 2-thiolation of uridine at the wobble position (U34) of tRNA, leading to the formation of s(2)U34. This is tRNA-specific 2-thiouridylase MnmA from Ruthia magnifica subsp. Calyptogena magnifica.